A 500-amino-acid chain; its full sequence is Alpha-L-arabinofuranosidase (500 aa).

The signal sequence occupies residues 1–21; it reads MLSNARIIAAGCIAAGSLVAA. N467 is a glycosylation site (N-linked (GlcNAc...) asparagine).

The protein belongs to the glycosyl hydrolase 54 family.

It catalyses the reaction Hydrolysis of terminal non-reducing alpha-L-arabinofuranoside residues in alpha-L-arabinosides.. Its pathway is glycan metabolism; L-arabinan degradation. This Hypocrea jecorina (Trichoderma reesei) protein is Alpha-L-arabinofuranosidase (abf1).